A 341-amino-acid chain; its full sequence is S-adenosylmethionine:tRNA ribosyltransferase-isomerase (341 aa).

The protein belongs to the QueA family. Monomer.

Its subcellular location is the cytoplasm. The enzyme catalyses 7-aminomethyl-7-carbaguanosine(34) in tRNA + S-adenosyl-L-methionine = epoxyqueuosine(34) in tRNA + adenine + L-methionine + 2 H(+). It participates in tRNA modification; tRNA-queuosine biosynthesis. Transfers and isomerizes the ribose moiety from AdoMet to the 7-aminomethyl group of 7-deazaguanine (preQ1-tRNA) to give epoxyqueuosine (oQ-tRNA). This Trichlorobacter lovleyi (strain ATCC BAA-1151 / DSM 17278 / SZ) (Geobacter lovleyi) protein is S-adenosylmethionine:tRNA ribosyltransferase-isomerase.